Consider the following 124-residue polypeptide: Small ribosomal subunit protein uS13 (124 aa).

The segment at 96-124 (LPVRGQRTKTNARTRKGPRRTVAGKKKAK) is disordered.

Belongs to the universal ribosomal protein uS13 family. Part of the 30S ribosomal subunit. Forms a loose heterodimer with protein S19. Forms two bridges to the 50S subunit in the 70S ribosome.

Functionally, located at the top of the head of the 30S subunit, it contacts several helices of the 16S rRNA. In the 70S ribosome it contacts the 23S rRNA (bridge B1a) and protein L5 of the 50S subunit (bridge B1b), connecting the 2 subunits; these bridges are implicated in subunit movement. Contacts the tRNAs in the A and P-sites. The sequence is that of Small ribosomal subunit protein uS13 from Symbiobacterium thermophilum (strain DSM 24528 / JCM 14929 / IAM 14863 / T).